A 659-amino-acid chain; its full sequence is Pentatricopeptide repeat-containing protein At3g48810 (659 aa).

16 PPR repeats span residues 75 to 109 (TPLT…GFHC), 110 to 144 (SEDL…GCDP), 145 to 179 (SVKI…GFEP), 180 to 214 (NVFT…GCCP), 215 to 243 (DAVS…ERFE), 245 to 279 (VVSV…GISP), 280 to 314 (NVIS…GCHP), 315 to 350 (NIYT…GLQP), 351 to 385 (NVVA…GCSP), 386 to 420 (NIRT…GCCP), 421 to 455 (NVVV…NCAP), 456 to 490 (SVPT…HRCP), 492 to 526 (NIVT…GVEW), 527 to 561 (SSST…GKSP), 562 to 598 (DEIT…KWRP), and 599 to 633 (DVIS…GIVP).

The protein belongs to the PPR family. P subfamily.

This is Pentatricopeptide repeat-containing protein At3g48810 from Arabidopsis thaliana (Mouse-ear cress).